The chain runs to 133 residues: Small ribosomal subunit protein bS6 (133 aa).

Positions Arg106–Pro125 are enriched in basic and acidic residues. A disordered region spans residues Arg106–Ala133.

This sequence belongs to the bacterial ribosomal protein bS6 family.

Binds together with bS18 to 16S ribosomal RNA. This Psychromonas ingrahamii (strain DSM 17664 / CCUG 51855 / 37) protein is Small ribosomal subunit protein bS6.